The sequence spans 425 residues: Actin-related protein 3 (425 aa).

The protein belongs to the actin family. ARP3 subfamily. Component of the Arp2/3 complex, at least composed of arx-1, arx-2, arx-4 and arx-6.

The protein localises to the cytoplasm. It localises to the cytoskeleton. Functions as ATP-binding component of the Arp2/3 complex which is involved in regulation of actin polymerization and together with an activating nucleation-promoting factor (NPF) mediates the formation of branched actin networks. Seems to contact the pointed end of the daughter actin filament. Plays a role in time-dependent memory loss and the retention of conditioned behavior over time. In Caenorhabditis elegans, this protein is Actin-related protein 3.